Consider the following 479-residue polypeptide: Cardiolipin synthase A (479 aa).

Transmembrane regions (helical) follow at residues 8 to 28 (LLAY…IHAV) and 38 to 58 (IAWA…YLIF). PLD phosphodiesterase domains lie at 218 to 245 (VNFR…GDEY) and 392 to 419 (TPGF…DNRS). Residues histidine 223, lysine 225, aspartate 230, histidine 397, lysine 399, and aspartate 404 contribute to the active site.

This sequence belongs to the phospholipase D family. Cardiolipin synthase subfamily. ClsA sub-subfamily.

The protein resides in the cell inner membrane. It carries out the reaction 2 a 1,2-diacyl-sn-glycero-3-phospho-(1'-sn-glycerol) = a cardiolipin + glycerol. Its function is as follows. Catalyzes the reversible phosphatidyl group transfer from one phosphatidylglycerol molecule to another to form cardiolipin (CL) (diphosphatidylglycerol) and glycerol. This Pseudomonas fluorescens (strain SBW25) protein is Cardiolipin synthase A.